Here is a 502-residue protein sequence, read N- to C-terminus: Mannitol 2-dehydrogenase (502 aa).

37 to 48 lines the NAD(+) pocket; the sequence is IVHIGVGGFHRA.

The protein belongs to the mannitol dehydrogenase family. Monomer.

It catalyses the reaction D-mannitol + NAD(+) = D-fructose + NADH + H(+). In terms of biological role, catalyzes the NAD(H)-dependent interconversion of D-fructose and D-mannitol in the mannitol metabolic pathway. In Neosartorya fischeri (strain ATCC 1020 / DSM 3700 / CBS 544.65 / FGSC A1164 / JCM 1740 / NRRL 181 / WB 181) (Aspergillus fischerianus), this protein is Mannitol 2-dehydrogenase.